Here is a 183-residue protein sequence, read N- to C-terminus: Thymidine kinase (183 aa).

ATP is bound at residue 11–18 (GPMFSGKT). Glutamate 89 functions as the Proton acceptor in the catalytic mechanism. Phenylalanine 119 contacts substrate. Zn(2+)-binding residues include cysteine 144 and cysteine 147. Position 163–167 (163–167 (VMDIG)) interacts with substrate. Residues cysteine 176 and cysteine 179 each coordinate Zn(2+).

It belongs to the thymidine kinase family.

The catalysed reaction is thymidine + ATP = dTMP + ADP + H(+). This is Thymidine kinase (TK) from Vertebrata (FPV).